The chain runs to 342 residues: Anthranilate phosphoribosyltransferase (342 aa).

5-phospho-alpha-D-ribose 1-diphosphate is bound by residues Gly-83, 86 to 87 (GD), Thr-91, 93 to 96 (NIST), 111 to 119 (KHGGRSVSS), and Ala-123. Gly-83 contacts anthranilate. Position 95 (Ser-95) interacts with Mg(2+). Anthranilate is bound at residue Arg-169. Positions 228 and 229 each coordinate Mg(2+).

Belongs to the anthranilate phosphoribosyltransferase family. Homodimer. Requires Mg(2+) as cofactor.

The catalysed reaction is N-(5-phospho-beta-D-ribosyl)anthranilate + diphosphate = 5-phospho-alpha-D-ribose 1-diphosphate + anthranilate. It functions in the pathway amino-acid biosynthesis; L-tryptophan biosynthesis; L-tryptophan from chorismate: step 2/5. Catalyzes the transfer of the phosphoribosyl group of 5-phosphorylribose-1-pyrophosphate (PRPP) to anthranilate to yield N-(5'-phosphoribosyl)-anthranilate (PRA). The polypeptide is Anthranilate phosphoribosyltransferase (Neisseria gonorrhoeae (strain ATCC 700825 / FA 1090)).